We begin with the raw amino-acid sequence, 370 residues long: F-box protein At1g66490 (370 aa).

Residues 1–46 (MRTISDLPVALVEEILSRVPLTSLSAVRSTCKTWNALSKTQIFGKT) enclose the F-box domain.

The sequence is that of F-box protein At1g66490 from Arabidopsis thaliana (Mouse-ear cress).